A 379-amino-acid chain; its full sequence is Alkanesulfonate monooxygenase (379 aa).

This sequence belongs to the SsuD family.

It catalyses the reaction an alkanesulfonate + FMNH2 + O2 = an aldehyde + FMN + sulfite + H2O + 2 H(+). In terms of biological role, catalyzes the desulfonation of aliphatic sulfonates. The protein is Alkanesulfonate monooxygenase of Pseudomonas savastanoi pv. phaseolicola (strain 1448A / Race 6) (Pseudomonas syringae pv. phaseolicola (strain 1448A / Race 6)).